Here is a 117-residue protein sequence, read N- to C-terminus: Ig heavy chain V region 186-1 (117 aa).

The signal sequence occupies residues Met-1–Ser-19. The tract at residues Gln-20 to Thr-49 is framework-1. Residues Cys-41 and Cys-115 are joined by a disulfide bond. Positions Ser-50–His-54 are complementarity-determining-1. The tract at residues Trp-55–Gly-68 is framework-2. The segment at Arg-69 to Ser-85 is complementarity-determining-2. A framework-3 region spans residues Lys-86–Arg-117.

In Mus musculus (Mouse), this protein is Ig heavy chain V region 186-1.